Consider the following 415-residue polypeptide: Alpha-N-acetylgalactosaminidase (415 aa).

The signal sequence occupies residues 1 to 17 (MLQKTVLLLALVAQVLM). Cystine bridges form between Cys38–Cys80, Cys42–Cys49, and Cys127–Cys158. Residues 78–79 (DD) and Lys154 contribute to the substrate site. Catalysis depends on Asp156, which acts as the Nucleophile. N-linked (GlcNAc...) asparagine glycosylation is present at Asn177. A disulfide bridge connects residues Cys187 and Cys209. Residue Ser188 coordinates substrate. A glycan (N-linked (GlcNAc...) asparagine) is linked at Asn201. Substrate is bound by residues Arg213 and Asp217. The active-site Proton donor is the Asp217. Ser322 and Ser332 each carry phosphoserine. Asn385 carries an N-linked (GlcNAc...) asparagine glycan.

Belongs to the glycosyl hydrolase 27 family. In terms of assembly, homodimer.

It is found in the lysosome. The catalysed reaction is Cleavage of non-reducing alpha-(1-&gt;3)-N-acetylgalactosamine residues from human blood group A and AB mucin glycoproteins, Forssman hapten and blood group A lacto series glycolipids.. It carries out the reaction a neolactoside IV(3)-alpha-GalNAc,IV(2)-alpha-Fuc-nLc4Cer(d18:1(4E)) + H2O = a neolactoside IV(2)-alpha-Fuc-nLc4Cer(d18:1(4E)) + N-acetyl-alpha-D-galactosamine. It catalyses the reaction a neolactoside IV(3)-alpha-GalNAc,IV(2)-alpha-Fuc-nLc4Cer(d18:0) + H2O = a neolactoside IV(2)-alpha-Fuc-nLc4Cer(d18:0) + N-acetyl-alpha-D-galactosamine. The enzyme catalyses a globoside IV3GalNAc-Gb4Cer + H2O = N-acetyl-alpha-D-galactosamine + a globoside Gb4Cer. Functionally, removes terminal alpha-N-acetylgalactosamine residues from glycolipids and glycopeptides. Required for the breakdown of glycolipids. The polypeptide is Alpha-N-acetylgalactosaminidase (Naga) (Mus musculus (Mouse)).